Here is a 325-residue protein sequence, read N- to C-terminus: MDLLTLLLEKKLADHLTFPETINAHWLAEGVLQLIPHEEGNRSLVISAGIHGNETAPIEILIQLLAQLAEGTLALKNNVLIIFGNLPAMRTNRRYLHDDLNRMFGGRYLNFPLGNERSRAAELENVVNRFFAEPSVSSTNIRWHIDLHTAIRASHHEQFALLPAQNRPFSAEFMQWLHDSDIDALVYHREKAGTFSHFLSEKFGADSCTMEMGKAMPFGENDLTRFQKITDALYGLISLSQITARIKFELKHYQVINSIIKSHDSFQLHIPADTLNFTELPEGFEIASQHDHHWKIKFPAKFILFPNAEVANGLRAGLLLALNKK.

Residues His51, Glu54, and His148 each coordinate Zn(2+). The active site involves Glu211.

The protein belongs to the AspA/AstE family. Succinylglutamate desuccinylase subfamily. Zn(2+) serves as cofactor.

It catalyses the reaction N-succinyl-L-glutamate + H2O = L-glutamate + succinate. Its pathway is amino-acid degradation; L-arginine degradation via AST pathway; L-glutamate and succinate from L-arginine: step 5/5. Functionally, transforms N(2)-succinylglutamate into succinate and glutamate. The polypeptide is Succinylglutamate desuccinylase (Photorhabdus laumondii subsp. laumondii (strain DSM 15139 / CIP 105565 / TT01) (Photorhabdus luminescens subsp. laumondii)).